A 576-amino-acid chain; its full sequence is 5'-nucleotidase (576 aa).

Positions 1-28 (MRPAAAKVPKWLLLALSALLPQWPAASA) are cleaved as a signal peptide. Residues Asp38 and His40 each coordinate Zn(2+). Cysteines 53 and 59 form a disulfide. N-linked (GlcNAc...) asparagine glycosylation is present at Asn55. Asp87, Asn119, His222, and His245 together coordinate Zn(2+). 2 N-linked (GlcNAc...) asparagine glycosylation sites follow: Asn313 and Asn335. 2 disulfides stabilise this stretch: Cys355-Cys360 and Cys367-Cys389. Position 356 (Arg356) interacts with AMP. Arg356 serves as a coordination point for IMP. The AMP site is built by Asn392 and Arg397. Residues Asn392 and Arg397 each contribute to the IMP site. Asn405 carries N-linked (GlcNAc...) asparagine glycosylation. Residue Phe419 participates in AMP binding. Position 419 (Phe419) interacts with IMP. Cysteines 478 and 481 form a disulfide. AMP-binding residues include Tyr502 and Asp508. Tyr502 and Asp508 together coordinate IMP. The GPI-anchor amidated serine moiety is linked to residue Ser551. The propeptide at 552–576 (AASHYQGSFPLVILSFWAMILILYQ) is removed in mature form.

Belongs to the 5'-nucleotidase family. As to quaternary structure, homodimer. Requires Zn(2+) as cofactor. In terms of tissue distribution, expressed at high levels in the placenta, kidney, lung and stomach and at lower levels in the thymus, spleen, skeletal muscle and esophagus.

The protein localises to the cell membrane. It catalyses the reaction a ribonucleoside 5'-phosphate + H2O = a ribonucleoside + phosphate. The catalysed reaction is a 2'-deoxyribonucleoside 5'-phosphate + H2O = a 2'-deoxyribonucleoside + phosphate. It carries out the reaction dTMP + H2O = thymidine + phosphate. The enzyme catalyses CMP + H2O = cytidine + phosphate. It catalyses the reaction IMP + H2O = inosine + phosphate. The catalysed reaction is AMP + H2O = adenosine + phosphate. It carries out the reaction GMP + H2O = guanosine + phosphate. The enzyme catalyses UMP + H2O = uridine + phosphate. It catalyses the reaction dAMP + H2O = 2'-deoxyadenosine + phosphate. The catalysed reaction is dCMP + H2O = 2'-deoxycytidine + phosphate. Its function is as follows. Catalyzes the hydrolysis of nucleotide monophosphates, releasing inorganic phosphate and the corresponding nucleoside. Hydrolyzes IMP. Shows a preference for ribonucleotide monophosphates over their equivalent deoxyribose forms. Although AMP is the preferred substrate can also hydrolyze UMP, GMP, CMP, dAMP, dCMP, dTMP, NAD and NMN. The chain is 5'-nucleotidase (Nt5e) from Mus musculus (Mouse).